The following is a 180-amino-acid chain: Adenine phosphoribosyltransferase (180 aa).

S2 carries the N-acetylserine modification. A phosphoserine mark is found at S15 and S30. Y60 carries the phosphotyrosine modification. At S66 the chain carries Phosphoserine. K114 carries the N6-acetyllysine modification. Phosphothreonine is present on T135.

The protein belongs to the purine/pyrimidine phosphoribosyltransferase family. In terms of assembly, homodimer.

The protein resides in the cytoplasm. The enzyme catalyses AMP + diphosphate = 5-phospho-alpha-D-ribose 1-diphosphate + adenine. It participates in purine metabolism; AMP biosynthesis via salvage pathway; AMP from adenine: step 1/1. Its function is as follows. Catalyzes a salvage reaction resulting in the formation of AMP, that is energically less costly than de novo synthesis. The polypeptide is Adenine phosphoribosyltransferase (Stochomys longicaudatus (Target rat)).